The following is a 115-amino-acid chain: Putative membrane protein insertion efficiency factor (115 aa).

Positions Asp-81–Asp-115 are disordered. Residues Pro-105 to Asp-115 show a composition bias toward basic and acidic residues.

The protein belongs to the UPF0161 family.

It is found in the cell inner membrane. Functionally, could be involved in insertion of integral membrane proteins into the membrane. This is Putative membrane protein insertion efficiency factor from Rhodospirillum rubrum (strain ATCC 11170 / ATH 1.1.1 / DSM 467 / LMG 4362 / NCIMB 8255 / S1).